The following is a 356-amino-acid chain: Probable scoulerine-9-O-methyltransferase OMT2B (356 aa).

M173 lines the S-adenosyl-L-methionine pocket. D176 serves as a coordination point for substrate. Residues T177, G202, D225, 245 to 246 (DI), and K259 contribute to the S-adenosyl-L-methionine site. 260–264 (YVLHN) is a substrate binding site. H263 acts as the Proton acceptor in catalysis.

This sequence belongs to the class I-like SAM-binding methyltransferase superfamily. Cation-independent O-methyltransferase family. COMT subfamily.

The enzyme catalyses (S)-scoulerine + S-adenosyl-L-methionine = (S)-tetrahydrocolumbamine + S-adenosyl-L-homocysteine + H(+). The protein operates within alkaloid biosynthesis. Functionally, methyltransferase involved in the biosynthesis of the benzylisoquinoline alkaloid noscapine. Catalyzes the conversion of (S)-scoulerine to (S)-tetrahydrocolumbamine. The heterodimers OMT2B-SOMT3 and OMT2B-6OMT do not possess 3-O-acetyl-4'-O-demethylpapaveroxine 4'-O-methyltransferase activity. The polypeptide is Probable scoulerine-9-O-methyltransferase OMT2B (Papaver somniferum (Opium poppy)).